A 165-amino-acid chain; its full sequence is Cysteine-rich hydrophobic domain-containing protein 2 (165 aa).

The stretch at 1-26 (MADFDEIYEEEEDEERALEEQLLKYS) forms a coiled coil. The short motif at 88–106 (CGCLCCCCTLGCSMWPVIC) is the CHIC motif (Cys-rich) element.

It belongs to the CHIC family. In terms of processing, palmitoylation in the CHIC motif is required for membrane association.

It is found in the membrane. The protein resides in the golgi apparatus. The sequence is that of Cysteine-rich hydrophobic domain-containing protein 2 (Chic2) from Mus musculus (Mouse).